We begin with the raw amino-acid sequence, 95 residues long: Glutamyl-tRNA(Gln) amidotransferase subunit C (95 aa).

Belongs to the GatC family. As to quaternary structure, heterotrimer of A, B and C subunits.

It catalyses the reaction L-glutamyl-tRNA(Gln) + L-glutamine + ATP + H2O = L-glutaminyl-tRNA(Gln) + L-glutamate + ADP + phosphate + H(+). It carries out the reaction L-aspartyl-tRNA(Asn) + L-glutamine + ATP + H2O = L-asparaginyl-tRNA(Asn) + L-glutamate + ADP + phosphate + 2 H(+). Allows the formation of correctly charged Asn-tRNA(Asn) or Gln-tRNA(Gln) through the transamidation of misacylated Asp-tRNA(Asn) or Glu-tRNA(Gln) in organisms which lack either or both of asparaginyl-tRNA or glutaminyl-tRNA synthetases. The reaction takes place in the presence of glutamine and ATP through an activated phospho-Asp-tRNA(Asn) or phospho-Glu-tRNA(Gln). The polypeptide is Glutamyl-tRNA(Gln) amidotransferase subunit C (Rhizobium meliloti (strain 1021) (Ensifer meliloti)).